A 741-amino-acid polypeptide reads, in one-letter code: MLSLKKYLTEGLLQFTILLSLIGVRVDVDTYLTSQLPPLREIILGPSSAYTQTQFHNLRNTLDGYGIHPKSIDLDNYFTARRLLSQVRALDRFQVPTTEVNAWLVHRDPEGSVSGSQPNSGLALESSSGLQDVTGPDNGVRESETEQGFGEDLEDLGAVAPPVSGDLTKEDIDLIDILWRQDIDLGAGREVFDYSHRQKEQDVDKELQDGREREDTWSGEGAEALARDLLVDGETGESFPAQFPADVSSIPEAVPSESESPALQNSLLSPLLTGTESPFDLEQQWQDLMSIMEMQAMEVNTSASEILYNAPPGDPLSTNYSLAPNTPINQNVSLHQASLGGCSQDFSLFSPEVESLPVASSSTLLPLVPSNSTSLNSTFGSTNLAGLFFPSQLNGTANDTSGPELPDPLGGLLDEAMLDEISLMDLAIEEGFNPVQASQLEEEFDSDSGLSLDSSHSPSSLSSSEGSSSSSSSSSSSSASSSASSSFSEEGAVGYSSDSETLDLEEAEGAVGYQPEYSKFCRMSYQDPSQLSCLPYLEHVGHNHTYNMAPSALDSADLPPPSTLKKGSKEKQADFLDKQMSRDEHRARAMKIPFTNDKIINLPVEEFNELLSKYQLSEAQLSLIRDIRRRGKNKMAAQNCRKRKLDTILNLERDVEDLQRDKARLLREKVEFLRSLRQMKQKVQSLYQEVFGRLRDEHGRPYSPSQYALQYAGDGSVLLIPRTMADQQARRQERKPKDRRK.

The chain crosses the membrane as a helical; Signal-anchor for type II membrane protein span at residues 7–24; it reads YLTEGLLQFTILLSLIGV. Disordered regions lie at residues 108 to 148 and 198 to 220; these read DPEG…TEQG and QKEQ…WSGE. A compositionally biased stretch (polar residues) spans 113–131; that stretch reads VSGSQPNSGLALESSSGLQ. The tract at residues 191 to 199 is cholesterol recognition/amino acid consensus (CRAC) region; that stretch reads VFDYSHRQK. Over residues 198-216 the composition is skewed to basic and acidic residues; that stretch reads QKEQDVDKELQDGREREDT. N-linked (GlcNAc...) asparagine glycosylation is found at N319 and N331. Positions 350-354 are CPD; sequence SPEVE. N-linked (GlcNAc...) asparagine glycosylation occurs at N394. Disordered regions lie at residues 441–501 and 551–582; these read EEEF…DSET and SALD…QMSR. Residues 447–451 carry the Destruction motif motif; it reads DSGLS. Low complexity predominate over residues 447–492; that stretch reads DSGLSLDSSHSPSSLSSSEGSSSSSSSSSSSSASSSASSSFSEEGA. At S497 the chain carries Phosphoserine; by CK2. The segment covering 567–582 has biased composition (basic and acidic residues); the sequence is GSKEKQADFLDKQMSR. Phosphoserine is present on S568. The 64-residue stretch at 623–686 folds into the bZIP domain; it reads LIRDIRRRGK…RQMKQKVQSL (64 aa). Residues 625–644 are basic motif; it reads RDIRRRGKNKMAAQNCRKRK. Residues 651–665 form a leucine-zipper region; that stretch reads LERDVEDLQRDKARL. The interval 722–741 is disordered; it reads RTMADQQARRQERKPKDRRK. The Nuclear localization signal motif lies at 730–737; sequence RRQERKPK. Positions 732–741 are enriched in basic residues; the sequence is QERKPKDRRK.

This sequence belongs to the bZIP family. CNC subfamily. In terms of assembly, interacts with KEAP1. Interacts (via CPD region) with FBXW7; leading to its ubiquitination and degradation. Interacts with SYVN1/HRD1; leading to its ubiquitination and degradation. Interacts (when ubiquitinated) with DDI2; leading to its cleavage. As to quaternary structure, interacts (via the bZIP domain) with small MAF protein (MAFF, MAFG or MAFK); required for binding to antioxidant response elements (AREs) on DNA. Interacts (via Destruction motif) with BTRC; leading to its ubiquitination and degradation. Interacts with CEBPB; the heterodimer represses expression of DSPP during odontoblast differentiation. Interacts with MOTS-c, a peptide produced by the mitochondrially encoded 12S rRNA MT-RNR1. Cleaved at Leu-104 by the aspartyl protease DDI2 following retrotranslocation, releasing the protein from the endoplasmic reticulum membrane and forming the transcription factor NRF1 that translocates into the nucleus. Ubiquitination is prerequisite for cleavage by aspartyl protease DDI2. In terms of processing, N-glycosylated in normal conditions, when it has a single-pass type II membrane protein topology, with the DNA-binding domain facing the endoplasmic reticulum lumen. Deglycosylated during retrotranslocation to the cytosolic side of the membrane, to have a single-pass type III membrane protein topology with the major part of the protein facing the cytosol. Post-translationally, ubiquitinated by the SCF(FBXW7) complex and SYVN1/HRD1, leading to its degradation by the proteasome. Ubiquitinated during retrotranslocation to the cytosolic side of the membrane: ubiquitination does not lead to degradation and is required for processing by the aspartyl protease DDI2 and subsequent release from the endoplasmic reticulum membrane. Phosphorylation by CK2 at Ser-497 inhibits transcription factor activity, possibly by affecting DNA-binding activity. Phosphorylation at Ser-568 is required for interaction with CEBPB. In terms of processing, ubiquitinated by the SCF(BTRC) complex in the nucleus, leading to its degradation by the proteasome. As to expression, isoform 1: Widely expressed including kidney, brown fat, white fat, large intestine, small intestine, stomach, lung, brain and liver. Isoform 1: Expressed in mouse embryonic fibroblasts (MEF). Isoform 2: Widely expressed including kidney, brown fat, white fat, large intestine, small intestine, stomach, lung, brain and liver. Isoform 2: levels in white fat, lung and liver are increased compared to isoform 1 (at protein level). Isoform 2: levels are elevated in brown fat and brain, but are reduced in liver compared to isoform 1 levels. Isoform 2: Expressed in mouse embryonic fibroblasts (MEF).

The protein localises to the endoplasmic reticulum membrane. It is found in the nucleus. It localises to the cytoplasm. Functionally, endoplasmic reticulum membrane sensor that translocates into the nucleus in response to various stresses to act as a transcription factor. Constitutes a precursor of the transcription factor NRF1. Able to detect various cellular stresses, such as cholesterol excess, oxidative stress or proteasome inhibition. In response to stress, it is released from the endoplasmic reticulum membrane following cleavage by the protease DDI2 and translocates into the nucleus to form the transcription factor NRF1. Acts as a key sensor of cholesterol excess: in excess cholesterol conditions, the endoplasmic reticulum membrane form of the protein directly binds cholesterol via its CRAC motif, preventing cleavage and release of the transcription factor NRF1, thereby allowing expression of genes promoting cholesterol removal, such as CD36. Involved in proteasome homeostasis: in response to proteasome inhibition, it is released from the endoplasmic reticulum membrane, translocates to the nucleus and activates expression of genes encoding proteasome subunits. In terms of biological role, CNC-type bZIP family transcription factor that translocates to the nucleus and regulates expression of target genes in response to various stresses. Heterodimerizes with small-Maf proteins (MAFF, MAFG or MAFK) and binds DNA motifs including the antioxidant response elements (AREs), which regulate expression of genes involved in oxidative stress response. Activates or represses expression of target genes, depending on the context. Plays a key role in cholesterol homeostasis by acting as a sensor of cholesterol excess: in low cholesterol conditions, translocates into the nucleus and represses expression of genes involved in defense against cholesterol excess, such as CD36. In excess cholesterol conditions, the endoplasmic reticulum membrane form of the protein directly binds cholesterol via its CRAC motif, preventing cleavage and release of the transcription factor NRF1, thereby allowing expression of genes promoting cholesterol removal. Critical for redox balance in response to oxidative stress: acts by binding the AREs motifs on promoters and mediating activation of oxidative stress response genes, such as GCLC, GCLM, GSS, MT1 and MT2. Plays an essential role during fetal liver hematopoiesis: probably has a protective function against oxidative stress and is involved in lipid homeostasis in the liver. Involved in proteasome homeostasis: in response to proteasome inhibition, mediates the 'bounce-back' of proteasome subunits by translocating into the nucleus and activating expression of genes encoding proteasome subunits. Also involved in regulating glucose flux. Together with CEBPB; represses expression of DSPP during odontoblast differentiation. In response to ascorbic acid induction, activates expression of SP7/Osterix in osteoblasts. Its function is as follows. Transcription factor that binds the antioxidant response elements (ARE) consensus sequence on promoters and activates their expression. Transcription factor that binds the extended kappa 3 site of the TNF-alpha promoter after Fc gamma RIII stimulation and participates in the induction of this cytokine. The chain is Endoplasmic reticulum membrane sensor NFE2L1 from Mus musculus (Mouse).